Here is a 153-residue protein sequence, read N- to C-terminus: LOB domain-containing protein 26 (153 aa).

The region spanning 4 to 105 (NPCEVCRFQN…EEVSKTKKLL (102 aa)) is the LOB domain. Positions 126 to 153 (KSKPSVLRKRKRKTKSSDESAIRVVEDS) are disordered. The span at 140–153 (KSSDESAIRVVEDS) shows a compositional bias: basic and acidic residues.

Belongs to the LOB domain-containing protein family.

The protein is LOB domain-containing protein 26 (LBD26) of Arabidopsis thaliana (Mouse-ear cress).